Here is a 543-residue protein sequence, read N- to C-terminus: Carboxypeptidase Y homolog A (543 aa).

Positions 1–17 are cleaved as a signal peptide; that stretch reads MKFLTTGLLATAALAAA. Residues 18–124 constitute a propeptide that is removed on maturation; that stretch reads QEQQVLQAED…KLHNYDLRVK (107 aa). 5 disulfides stabilise this stretch: cysteine 179–cysteine 419, cysteine 313–cysteine 327, cysteine 337–cysteine 360, cysteine 344–cysteine 353, and cysteine 382–cysteine 389. A glycan (N-linked (GlcNAc...) asparagine) is linked at asparagine 210. Serine 266 is a catalytic residue. Residue aspartate 458 is part of the active site. Asparagine 509 carries N-linked (GlcNAc...) asparagine glycosylation. The active site involves histidine 520.

Belongs to the peptidase S10 family.

The protein localises to the vacuole. The catalysed reaction is Release of a C-terminal amino acid with broad specificity.. Functionally, vacuolar carboxypeptidase involved in degradation of small peptides. Digests preferentially peptides containing an aliphatic or hydrophobic residue in P1' position, as well as methionine, leucine or phenylalanine in P1 position of ester substrate. The protein is Carboxypeptidase Y homolog A (CPYA) of Trichophyton tonsurans (Scalp ringworm fungus).